Consider the following 588-residue polypeptide: Calicin (588 aa).

The region spanning 28-98 is the BTB domain; it reads WDMALTVDHH…FYSGKVVISE (71 aa). Positions 133 to 235 constitute a BACK domain; it reads CLRYLFLAEL…NAVSNKTLMF (103 aa). The residue at position 149 (S149) is a Phosphoserine. 6 Kelch repeats span residues 280–327, 328–375, 377–423, 425–475, 476–525, and 526–580; these read SVVI…AAGR, YIYI…TCGG, VYSV…TKGD, NLYI…SFHQ, DNIL…IGDS, and KVFV…LAKL.

In terms of assembly, interacts with CYLC1; the interaction may be relevant for proper acrosome attachment to the nuclear envelope.

Its subcellular location is the cytoplasm. The protein localises to the cytoskeleton. It localises to the perinuclear theca. It is found in the calyx. In terms of biological role, required for both nuclear and acrosomal shaping during spermiogenesis. The chain is Calicin (Ccin) from Rattus norvegicus (Rat).